Consider the following 70-residue polypeptide: Probable non-specific lipid-transfer protein 2 (70 aa).

4 disulfides stabilise this stretch: Cys4/Cys38, Cys12/Cys26, Cys27/Cys62, and Cys36/Cys69.

In terms of biological role, potential phospholipid transfer protein. The protein is Probable non-specific lipid-transfer protein 2 of Zea mays (Maize).